The following is a 527-amino-acid chain: Coproporphyrinogen III oxidase (527 aa).

The span at 1-14 (MSTTDRVTTPTPTV) shows a compositional bias: low complexity. The segment at 1–23 (MSTTDRVTTPTPTVSGTDAPGPD) is disordered. Residues 33–38 (GGGITG), 56–57 (ES), Lys64, and 78–81 (GPDS) each bind FAD. The tract at residues 231-267 (RRAARQRAAQNNAQQNSSHQNSTGQNNSAGTRGPAAS) is disordered. The segment covering 236-252 (QRAAQNNAQQNSSHQNS) has biased composition (low complexity). Residues Val300, Trp448, and 487-489 (VGL) contribute to the FAD site.

Belongs to the protoporphyrinogen/coproporphyrinogen oxidase family. Coproporphyrinogen III oxidase subfamily. Requires FAD as cofactor.

It is found in the cytoplasm. It catalyses the reaction coproporphyrinogen III + 3 O2 = coproporphyrin III + 3 H2O2. The protein operates within porphyrin-containing compound metabolism; protoheme biosynthesis. Involved in coproporphyrin-dependent heme b biosynthesis. Catalyzes the oxidation of coproporphyrinogen III to coproporphyrin III. In Propionibacterium freudenreichii subsp. freudenreichii, this protein is Coproporphyrinogen III oxidase.